A 490-amino-acid chain; its full sequence is Glutamyl-tRNA(Gln) amidotransferase subunit A (490 aa).

Active-site charge relay system residues include lysine 76 and serine 151. The active-site Acyl-ester intermediate is serine 175.

The protein belongs to the amidase family. GatA subfamily. In terms of assembly, heterotrimer of A, B and C subunits.

It carries out the reaction L-glutamyl-tRNA(Gln) + L-glutamine + ATP + H2O = L-glutaminyl-tRNA(Gln) + L-glutamate + ADP + phosphate + H(+). Functionally, allows the formation of correctly charged Gln-tRNA(Gln) through the transamidation of misacylated Glu-tRNA(Gln) in organisms which lack glutaminyl-tRNA synthetase. The reaction takes place in the presence of glutamine and ATP through an activated gamma-phospho-Glu-tRNA(Gln). The chain is Glutamyl-tRNA(Gln) amidotransferase subunit A from Methylobacillus flagellatus (strain ATCC 51484 / DSM 6875 / VKM B-1610 / KT).